The sequence spans 215 residues: Adenylate kinase (215 aa).

An ATP-binding site is contributed by 10–15 (GSGKGT). The interval 30 to 59 (STGDLFRTNIENDTPLGKEIKQIVENGQLV) is NMP. AMP is bound by residues Thr-31, Arg-36, 57 to 59 (QLV), 85 to 88 (GFPR), and Gln-92. The LID stretch occupies residues 121–158 (GRRICQSCCKIFNIYTLPTKEKEICDFCQGILYQRKDD). ATP is bound at residue Arg-122. Residues Cys-125 and Cys-128 each coordinate Zn(2+). An ATP-binding site is contributed by 131–132 (IF). Cys-145 and Cys-148 together coordinate Zn(2+). AMP-binding residues include Arg-155 and Arg-166. Lys-194 contributes to the ATP binding site.

The protein belongs to the adenylate kinase family. Monomer.

It is found in the cytoplasm. It catalyses the reaction AMP + ATP = 2 ADP. It functions in the pathway purine metabolism; AMP biosynthesis via salvage pathway; AMP from ADP: step 1/1. In terms of biological role, catalyzes the reversible transfer of the terminal phosphate group between ATP and AMP. Plays an important role in cellular energy homeostasis and in adenine nucleotide metabolism. This chain is Adenylate kinase, found in Borrelia recurrentis (strain A1).